The following is a 435-amino-acid chain: Tryptophan--tRNA ligase (435 aa).

ATP contacts are provided by residues 10–12 (TTS) and 18–19 (GN). Positions 11-19 (TSGTPHLGN) match the 'HIGH' region motif. Aspartate 143 is an L-tryptophan binding site. Residues 155–157 (GRD), leucine 195, and 202–206 (KMSKS) each bind ATP. The 'KMSKS' region signature appears at 202-206 (KMSKS).

The protein belongs to the class-I aminoacyl-tRNA synthetase family. In terms of assembly, homodimer.

It localises to the cytoplasm. The catalysed reaction is tRNA(Trp) + L-tryptophan + ATP = L-tryptophyl-tRNA(Trp) + AMP + diphosphate + H(+). In terms of biological role, catalyzes the attachment of tryptophan to tRNA(Trp). The chain is Tryptophan--tRNA ligase from Xylella fastidiosa (strain Temecula1 / ATCC 700964).